The following is a 95-amino-acid chain: Large ribosomal subunit protein uL23 (95 aa).

This sequence belongs to the universal ribosomal protein uL23 family. As to quaternary structure, part of the 50S ribosomal subunit. Contacts protein L29, and trigger factor when it is bound to the ribosome.

Its function is as follows. One of the early assembly proteins it binds 23S rRNA. One of the proteins that surrounds the polypeptide exit tunnel on the outside of the ribosome. Forms the main docking site for trigger factor binding to the ribosome. The sequence is that of Large ribosomal subunit protein uL23 from Pelotomaculum thermopropionicum (strain DSM 13744 / JCM 10971 / SI).